We begin with the raw amino-acid sequence, 513 residues long: MHLSSLSLSLTALAIVSPSAAYPHLGSSQPVLHTNSDTTQSRADAIKAAFSHAWDGYLQYAFPHDELHPVSNGYGDSRNGWGASAVDALSTAVIMRNATIVNQILDHVAKIDYSKTNTTVSLFETTIRYLGGMLSGYDLLKGPVSDLVQDSSKIDVLLTQSKNLGDVLKFAFDTPSGVPYNNLNITSGGNDGAKTNGLAVTGTLALEWTRLSDLTGDTTYADLSQKAESYLLNPQPKSAEPFPGLVGSNINISNGQFTDAQVSWNGGDDSYYEYLIKMYVYDPKRFGLYKDRWVAAAQSTMQHLASHPSTRPDLTFLASYNNGTLGLSSQHLTCFDGGSFLLGGTVLNRTDFINFGLDLVSGCHDTYNSTLTGIGPESFSWDTSDIPSSQQSLYEKAGFYITSGAYILRPEVIESFYYAWRATGQETYREWIWSAFSAVNDYCRTDSGFSGLTDVNAANGGSRYDNQESFLFAEVMKYSYMAFAEDAAWQVQPGSGNQFVFNTEAHPVRVSST.

An N-terminal signal peptide occupies residues 1–21 (MHLSSLSLSLTALAIVSPSAA). Asn97, Asn117, Asn184, Asn251, Asn322, Asn348, and Asn368 each carry an N-linked (GlcNAc...) asparagine glycan. A disulfide bridge links Cys334 with Cys363. The active-site Proton donor is Glu377. Position 503 (Thr503) interacts with Ca(2+).

The protein belongs to the glycosyl hydrolase 47 family. Monomer. Ca(2+) serves as cofactor. The cofactor is Mg(2+).

The protein localises to the cytoplasmic vesicle lumen. The catalysed reaction is N(4)-(alpha-D-Man-(1-&gt;2)-alpha-D-Man-(1-&gt;2)-alpha-D-Man-(1-&gt;3)-[alpha-D-Man-(1-&gt;2)-alpha-D-Man-(1-&gt;3)-[alpha-D-Man-(1-&gt;2)-alpha-D-Man-(1-&gt;6)]-alpha-D-Man-(1-&gt;6)]-beta-D-Man-(1-&gt;4)-beta-D-GlcNAc-(1-&gt;4)-beta-D-GlcNAc)-L-asparaginyl-[protein] (N-glucan mannose isomer 9A1,2,3B1,2,3) + 4 H2O = N(4)-(alpha-D-Man-(1-&gt;3)-[alpha-D-Man-(1-&gt;3)-[alpha-D-Man-(1-&gt;6)]-alpha-D-Man-(1-&gt;6)]-beta-D-Man-(1-&gt;4)-beta-D-GlcNAc-(1-&gt;4)-beta-D-GlcNAc)-L-asparaginyl-[protein] (N-glucan mannose isomer 5A1,2) + 4 beta-D-mannose. It catalyses the reaction N(4)-(alpha-D-Man-(1-&gt;2)-alpha-D-Man-(1-&gt;2)-alpha-D-Man-(1-&gt;3)-[alpha-D-Man-(1-&gt;3)-[alpha-D-Man-(1-&gt;2)-alpha-D-Man-(1-&gt;6)]-alpha-D-Man-(1-&gt;6)]-beta-D-Man-(1-&gt;4)-beta-D-GlcNAc-(1-&gt;4)-beta-D-GlcNAc)-L-asparaginyl-[protein] (N-glucan mannose isomer 8A1,2,3B1,3) + 3 H2O = N(4)-(alpha-D-Man-(1-&gt;3)-[alpha-D-Man-(1-&gt;3)-[alpha-D-Man-(1-&gt;6)]-alpha-D-Man-(1-&gt;6)]-beta-D-Man-(1-&gt;4)-beta-D-GlcNAc-(1-&gt;4)-beta-D-GlcNAc)-L-asparaginyl-[protein] (N-glucan mannose isomer 5A1,2) + 3 beta-D-mannose. The protein operates within protein modification; protein glycosylation. Involved in the maturation of Asn-linked oligosaccharides. Progressively trims alpha-1,2-linked mannose residues from Man(9)GlcNAc(2) to produce Man(5)GlcNAc(2). The protein is Probable mannosyl-oligosaccharide alpha-1,2-mannosidase 1B (mns1B) of Aspergillus niger (strain ATCC MYA-4892 / CBS 513.88 / FGSC A1513).